Reading from the N-terminus, the 1004-residue chain is 26S proteasome non-ATPase regulatory subunit 1 homolog A (1004 aa).

Ala2 carries the N-acetylalanine modification. A Glycyl lysine isopeptide (Lys-Gly) (interchain with G-Cter in ubiquitin) cross-link involves residue Lys166. PC repeat units follow at residues 412-447, 452-485, 487-521, 522-555, 557-590, 591-626, 627-659, 661-695, 696-736, and 739-771; these read SATA…GGSP, GALY…EVIQ, GACL…VAGE, AAGI…EKII, GLAL…IIRY, GGMY…DVRR, TAVL…PHVR, GAAL…FVRQ, GALI…DTMS, and GAIL…TAVI. Disordered stretches follow at residues 858–905 and 959–1004; these read EQKA…KKAP and VLSL…EYAS. Residue Ser896 is modified to Phosphoserine. Residues 965–987 are compositionally biased toward low complexity; sequence APTSTASPATGTAAAAQGTPASA.

It belongs to the proteasome subunit S1 family. As to quaternary structure, component of the 19S regulatory particle (RP/PA700) base subcomplex of the 26S proteasome. The 26S proteasome is composed of a core protease (CP), known as the 20S proteasome, capped at one or both ends by the 19S regulatory particle (RP/PA700). The RP/PA700 complex is composed of at least 17 different subunits in two subcomplexes, the base and the lid, which form the portions proximal and distal to the 20S proteolytic core, respectively. As to expression, ubiquitous with highest expression in flowers.

Functionally, acts as a regulatory subunit of the 26 proteasome which is involved in the ATP-dependent degradation of ubiquitinated proteins. The protein is 26S proteasome non-ATPase regulatory subunit 1 homolog A (RPN2A) of Arabidopsis thaliana (Mouse-ear cress).